The following is a 446-amino-acid chain: Probable rhamnogalacturonase A (446 aa).

Residues 1 to 18 form the signal peptide; the sequence is MPALPILALALAPLLVNG. A disulfide bridge connects residues C39 and C65. N-linked (GlcNAc...) asparagine glycans are attached at residues N50, N115, and N124. Residue D216 is the Proton donor of the active site. An intrachain disulfide couples C218 to C235. N-linked (GlcNAc...) asparagine glycans are attached at residues N236 and N281. H291 is an active-site residue. Residue N318 is glycosylated (N-linked (GlcNAc...) asparagine). Disulfide bonds link C341–C347 and C369–C378.

It belongs to the glycosyl hydrolase 28 family.

Its subcellular location is the secreted. It carries out the reaction Endohydrolysis of alpha-D-GalA-(1-&gt;2)-alpha-L-Rha glycosidic bond in the rhamnogalacturonan I backbone with initial inversion of anomeric configuration releasing oligosaccharides with beta-D-GalA at the reducing end.. Pectinolytic enzymes consist of four classes of enzymes: pectine lyase, polygalacturonase, pectin methylesterase and rhamnogalacturonase. Hydrolyzes alpha-D-galacturonopyranosyl-(1,2)-alpha-L-rhamnopyranosyl linkages in the backbone of the hairy regions of pectins. The sequence is that of Probable rhamnogalacturonase A (rhgA) from Aspergillus niger (strain ATCC MYA-4892 / CBS 513.88 / FGSC A1513).